A 129-amino-acid chain; its full sequence is Virion-associated protein (129 aa).

Coiled coils occupy residues 1–31 (MANLNQIQKEVSEILSDQKSMKSDIKAILEL) and 38–59 (TKESLEAVAAKIVNDLTKLIND). The segment at 122–129 (PAGWPNQF) is capsid binding.

Belongs to the caulimovirus ORF III family. Homotetramer, through coiled-coil domain. Homotrimer when interacts with icosehadral capsid. Interacts with capsid protein, and with Movement protein.

The protein localises to the virion. It is found in the host cell junction. Its subcellular location is the host plasmodesma. Functionally, plays a role in virus cell-to-cell and plant-to-plant transmission. Interacts with virion icosahedral capsid and movement protein, thereby facilitating virion cell-to-cell transmission through plasmodesmata opened by viral movement protein. Also interacts with aphid transmission factor, attaching the virion to aphid stylet when the animal feeds on an virus infected plant. Aphid saliva may later detach the virion, inducing release of infectious particles when the animal feeds on a new plant. This is Virion-associated protein from Arabidopsis thaliana (Mouse-ear cress).